The following is a 689-amino-acid chain: Glycine--tRNA ligase beta subunit (689 aa).

The protein belongs to the class-II aminoacyl-tRNA synthetase family. Tetramer of two alpha and two beta subunits.

Its subcellular location is the cytoplasm. The enzyme catalyses tRNA(Gly) + glycine + ATP = glycyl-tRNA(Gly) + AMP + diphosphate. The polypeptide is Glycine--tRNA ligase beta subunit (Actinobacillus pleuropneumoniae serotype 5b (strain L20)).